A 322-amino-acid chain; its full sequence is MAAAPSESIPSVNKAWVYSEYGKTSDVLKFDPSVAVPEVKEDQVLIKVVAASLNPVDFKRALGYFKDTDSPLPTVPGYDVAGVVVKVGSQVTKFKVGDEVYGDLNEAALVNPTRFGSLAEYTAADERVLAHKPKDLSFIEAASLPLAIETAYEGLERAELSAGKSILVLGGAGGVGTHIIQLAKHVFGASKVAATASTKKLDFLRTLGVDLAIDYTKENIEDLPEKFDVVYDAVGETDKAVKAVKEGGKVVTIVGPATPPAIHFVLTSKGSVLEKLKPYLESGKVKPVLDPTSPYPFTKLVEAFGYLESSRATGKVVVYPIP.

NADP(+) is bound by residues lysine 59, 174–175 (GV), 197–200 (STKK), tyrosine 215, isoleucine 253, 264–266 (FVL), 311–312 (RA), and 311–322 (RATGKVVVYPIP). A substrate-binding site is contributed by lysine 59.

Belongs to the zinc-containing alcohol dehydrogenase family. Quinone oxidoreductase subfamily. As to quaternary structure, monomer. Post-translationally, the N-terminus is blocked.

It carries out the reaction 4-hydroxy-2,5-dimethyl-furan-3(2H)-one + NADP(+) = 4-hydroxy-5-methyl-2-methylenefuran-3(2H)-one + NADPH + H(+). Functionally, enone oxidoreductase involved in the biosynthesis of 4-hydroxy-2,5-dimethyl-3(2H)-furanone (HDMF or furaneol), the key flavor compound in strawberries. Can use both NADH and NADPH as the electron donor. In Fragaria ananassa (Strawberry), this protein is 2-methylene-furan-3-one reductase (EO).